Reading from the N-terminus, the 377-residue chain is Spermidine/putrescine import ATP-binding protein PotA (377 aa).

Positions Val-22 to Ile-252 constitute an ABC transporter domain. Gly-54–Thr-61 serves as a coordination point for ATP.

It belongs to the ABC transporter superfamily. Spermidine/putrescine importer (TC 3.A.1.11.1) family. As to quaternary structure, the complex is composed of two ATP-binding proteins (PotA), two transmembrane proteins (PotB and PotC) and a solute-binding protein (PotD).

Its subcellular location is the cell membrane. The enzyme catalyses ATP + H2O + polyamine-[polyamine-binding protein]Side 1 = ADP + phosphate + polyamineSide 2 + [polyamine-binding protein]Side 1.. Its function is as follows. Part of the ABC transporter complex PotABCD involved in spermidine/putrescine import. Responsible for energy coupling to the transport system. The sequence is that of Spermidine/putrescine import ATP-binding protein PotA from Rubrobacter xylanophilus (strain DSM 9941 / JCM 11954 / NBRC 16129 / PRD-1).